Reading from the N-terminus, the 386-residue chain is Glucose-1-phosphate adenylyltransferase (386 aa).

Residues Tyr100, Gly165, Glu180–Lys181, and Ser191 each bind alpha-D-glucose 1-phosphate.

It belongs to the bacterial/plant glucose-1-phosphate adenylyltransferase family. In terms of assembly, homotetramer.

The catalysed reaction is alpha-D-glucose 1-phosphate + ATP + H(+) = ADP-alpha-D-glucose + diphosphate. It participates in glycan biosynthesis; glycogen biosynthesis. Functionally, involved in the biosynthesis of ADP-glucose, a building block required for the elongation reactions to produce glycogen. Catalyzes the reaction between ATP and alpha-D-glucose 1-phosphate (G1P) to produce pyrophosphate and ADP-Glc. This Clostridium botulinum (strain Eklund 17B / Type B) protein is Glucose-1-phosphate adenylyltransferase.